A 583-amino-acid polypeptide reads, in one-letter code: Kelch-like protein 35 (583 aa).

In terms of domain architecture, BTB spans 41–119 (TDVVLRAGGR…VYGAGVRLRA (79 aa)). The region spanning 146 to 248 (LEGRLRAANS…LEHVRLPLLA (103 aa)) is the BACK domain. Kelch repeat units follow at residues 301-350 (VIVV…ALRN), 352-394 (VYVS…VVQG), 395-441 (QLFA…SCAG), 443-489 (LFVI…SLED), 490-531 (TIYV…VCDG), and 533-579 (VHIL…TIIQ).

The protein is Kelch-like protein 35 (KLHL35) of Homo sapiens (Human).